We begin with the raw amino-acid sequence, 320 residues long: Esterase LipI (320 aa).

Residues serine 165, aspartate 261, and histidine 291 contribute to the active site.

This sequence belongs to the 'GDXG' lipolytic enzyme family.

The catalysed reaction is a fatty acid ester + H2O = an aliphatic alcohol + a fatty acid + H(+). The enzyme catalyses a butanoate ester + H2O = an aliphatic alcohol + butanoate + H(+). It catalyses the reaction an octanoate ester + H2O = an aliphatic alcohol + octanoate + H(+). It carries out the reaction decanoate ester + H2O = decanoate + an aliphatic alcohol + H(+). The catalysed reaction is an acetyl ester + H2O = an aliphatic alcohol + acetate + H(+). The enzyme catalyses a dodecanoate ester + H2O = an aliphatic alcohol + dodecanoate + H(+). Inhibited by ionic detergents SDS (anions) and CTAB (cationic). Strongly inhibited by Zn(2+). In terms of biological role, esterase that can hydrolyze short-chain esters with the carbon chain containing 2 to 12 carbon atoms. In vitro, pNP-butyrate is the preferred substrate. This Mycobacterium tuberculosis (strain ATCC 25618 / H37Rv) protein is Esterase LipI.